We begin with the raw amino-acid sequence, 331 residues long: MPAESHTVYPAYRFSIAPMLDWTDRHCRYFLRLLSRNTLLYTEMVTTGAIIHGKGDYLAYSEEEHPVALQLGGSDPAALAQCAKLAEARGYDEINLNVGCPSDRVQNGMFGACLMGNAQLVADCVKAMRDVVSIPVTVKTRIGIDDQDSYEFLCDFINTVSGKGECEMFIIHARKAWLSGLSPKENREIPPLDYPRVYQLKRDFPHLTMSINGGIKSLEEAKAHLQHMDGVMVGREAYQNPGILAAVDREIFGSSDTDADPVAVVRAMYPYIERELSQGTYLGHITRHMLGLFQGIPGARQWRRYLSENAHKAGADINVLEHALKLVADKR.

Residues 18–20 and Q70 each bind FMN; that span reads PML. C100 serves as the catalytic Proton donor. Residues K139, H172, 212-214, and 234-235 each bind FMN; these read NGG and GR.

This sequence belongs to the Dus family. DusA subfamily. FMN is required as a cofactor.

The enzyme catalyses 5,6-dihydrouridine(20) in tRNA + NADP(+) = uridine(20) in tRNA + NADPH + H(+). The catalysed reaction is 5,6-dihydrouridine(20) in tRNA + NAD(+) = uridine(20) in tRNA + NADH + H(+). It catalyses the reaction 5,6-dihydrouridine(20a) in tRNA + NADP(+) = uridine(20a) in tRNA + NADPH + H(+). It carries out the reaction 5,6-dihydrouridine(20a) in tRNA + NAD(+) = uridine(20a) in tRNA + NADH + H(+). In terms of biological role, catalyzes the synthesis of 5,6-dihydrouridine (D), a modified base found in the D-loop of most tRNAs, via the reduction of the C5-C6 double bond in target uridines. Specifically modifies U20 and U20a in tRNAs. The chain is tRNA-dihydrouridine(20/20a) synthase from Escherichia coli O6:H1 (strain CFT073 / ATCC 700928 / UPEC).